We begin with the raw amino-acid sequence, 439 residues long: Transcriptional enhancer factor TEF-5 (439 aa).

The segment covering methionine 1 to proline 12 has biased composition (polar residues). The segment at methionine 1–valine 34 is disordered. At alanine 2 the chain carries N-acetylalanine. The segment covering glutamate 14–aspartate 28 has biased composition (basic and acidic residues). A DNA-binding region (TEA) is located at residues aspartate 28–glutamate 104. Position 148 is a phosphoserine (serine 148). The segment at glycine 173 to aspartate 439 is transcriptional activation.

As to quaternary structure, interacts with YAP1 and WWTR1/TAZ. Expressed in embryos as well as in many adult tissues.

The protein localises to the nucleus. Functionally, transcription factor which plays a key role in the Hippo signaling pathway, a pathway involved in organ size control and tumor suppression by restricting proliferation and promoting apoptosis. The core of this pathway is composed of a kinase cascade wherein MST1/MST2, in complex with its regulatory protein SAV1, phosphorylates and activates LATS1/2 in complex with its regulatory protein MOB1, which in turn phosphorylates and inactivates YAP1 oncoprotein and WWTR1/TAZ. Acts by mediating gene expression of YAP1 and WWTR1/TAZ, thereby regulating cell proliferation, migration and epithelial mesenchymal transition (EMT) induction. The polypeptide is Transcriptional enhancer factor TEF-5 (Tead3) (Mus musculus (Mouse)).